We begin with the raw amino-acid sequence, 117 residues long: Conotoxin vil14.3 (117 aa).

Residues 1-22 (MGFRVLVLVVMATTSALPFTFS) form the signal peptide. A propeptide spanning residues 23-90 (EEPGRSPFRP…FAELSVGQRR (68 aa)) is cleaved from the precursor. Positions 53–79 (RADGQPPDMRQPEMRRPEMRRPEVRQP) are disordered. A compositionally biased stretch (basic and acidic residues) spans 62–79 (RQPEMRRPEMRRPEVRQP). 2 cysteine pairs are disulfide-bonded: C96–C116 and C100–C112.

Belongs to the conotoxin R superfamily. As to expression, expressed by the venom duct.

The protein resides in the secreted. The chain is Conotoxin vil14.3 from Conus villepinii (Villepin's cone).